A 186-amino-acid chain; its full sequence is ADP compounds hydrolase NudE (186 aa).

Residue Glu40 participates in substrate binding. A Nudix hydrolase domain is found at 45 to 172 (TNREAVMIVP…DFNEARNVSA (128 aa)). Residues 80 to 101 (GLIDPGESVYEAANRELKEEVG) carry the Nudix box motif. A divalent metal cation-binding residues include Glu95 and Glu99. A substrate-binding site is contributed by Ser118.

This sequence belongs to the Nudix hydrolase family. In terms of assembly, homodimer. Mg(2+) serves as cofactor.

The enzyme catalyses ADP-D-ribose + H2O = D-ribose 5-phosphate + AMP + 2 H(+). Active on adenosine(5')triphospho(5')adenosine (Ap3A), ADP-ribose, NADH, adenosine(5')diphospho(5')adenosine (Ap2A). This is ADP compounds hydrolase NudE (nudE) from Escherichia coli (strain K12).